A 225-amino-acid chain; its full sequence is Ribonuclease T (225 aa).

The disordered stretch occupies residues 1 to 21; that stretch reads MSEDHFDEEHEGHGGGGGSRH. An Exonuclease domain is found at 33–207; that stretch reads VVVDVETGGF…YDTEKTAELF (175 aa). Residues Asp-36, Glu-38, His-194, and Asp-199 each coordinate Mg(2+). His-194 acts as the Proton donor/acceptor in catalysis.

This sequence belongs to the RNase T family. In terms of assembly, homodimer. Mg(2+) serves as cofactor.

Its function is as follows. Trims short 3' overhangs of a variety of RNA species, leaving a one or two nucleotide 3' overhang. Responsible for the end-turnover of tRNA: specifically removes the terminal AMP residue from uncharged tRNA (tRNA-C-C-A). Also appears to be involved in tRNA biosynthesis. The sequence is that of Ribonuclease T from Pseudomonas syringae pv. tomato (strain ATCC BAA-871 / DC3000).